Here is a 477-residue protein sequence, read N- to C-terminus: ATP synthase subunit beta, chloroplastic (477 aa).

156-163 (GGAGVGKT) lines the ATP pocket.

The protein belongs to the ATPase alpha/beta chains family. F-type ATPases have 2 components, CF(1) - the catalytic core - and CF(0) - the membrane proton channel. CF(1) has five subunits: alpha(3), beta(3), gamma(1), delta(1), epsilon(1). CF(0) has four main subunits: a(1), b(1), b'(1) and c(9-12).

The protein localises to the plastid. It is found in the chloroplast thylakoid membrane. The enzyme catalyses ATP + H2O + 4 H(+)(in) = ADP + phosphate + 5 H(+)(out). Produces ATP from ADP in the presence of a proton gradient across the membrane. The catalytic sites are hosted primarily by the beta subunits. The polypeptide is ATP synthase subunit beta, chloroplastic (Bigelowiella natans (Pedinomonas minutissima)).